The primary structure comprises 294 residues: Tryptophan 2,3-dioxygenase (294 aa).

Residues 63-67 (FIIQH), Tyr125, and Arg129 each bind substrate. His252 contacts heme. Thr266 is a binding site for substrate.

The protein belongs to the tryptophan 2,3-dioxygenase family. In terms of assembly, homotetramer. It depends on heme as a cofactor.

It carries out the reaction L-tryptophan + O2 = N-formyl-L-kynurenine. It functions in the pathway amino-acid degradation; L-tryptophan degradation via kynurenine pathway; L-kynurenine from L-tryptophan: step 1/2. Its function is as follows. Heme-dependent dioxygenase that catalyzes the oxidative cleavage of the L-tryptophan (L-Trp) pyrrole ring and converts L-tryptophan to N-formyl-L-kynurenine. Catalyzes the oxidative cleavage of the indole moiety. In Polaromonas sp. (strain JS666 / ATCC BAA-500), this protein is Tryptophan 2,3-dioxygenase.